A 193-amino-acid chain; its full sequence is Molybdenum cofactor guanylyltransferase (193 aa).

GTP is bound by residues 8–10 (LAG), Lys-21, Asp-67, and Asp-98. Asp-98 lines the Mg(2+) pocket.

Belongs to the MobA family. In terms of assembly, monomer. Requires Mg(2+) as cofactor.

Its subcellular location is the cytoplasm. It carries out the reaction Mo-molybdopterin + GTP + H(+) = Mo-molybdopterin guanine dinucleotide + diphosphate. In terms of biological role, transfers a GMP moiety from GTP to Mo-molybdopterin (Mo-MPT) cofactor (Moco or molybdenum cofactor) to form Mo-molybdopterin guanine dinucleotide (Mo-MGD) cofactor. The polypeptide is Molybdenum cofactor guanylyltransferase (Cereibacter sphaeroides (strain ATCC 17023 / DSM 158 / JCM 6121 / CCUG 31486 / LMG 2827 / NBRC 12203 / NCIMB 8253 / ATH 2.4.1.) (Rhodobacter sphaeroides)).